The chain runs to 456 residues: Serine/threonine-protein kinase PBS1 (456 aa).

The interval 1–57 (MGCFSCFDSSDDEKLNPVDESNHGQKKQSQPTVSNNISGLPSGGEKLSSKTNGGSKR) is disordered. Gly2 carries the N-myristoyl glycine lipid modification. Residues Cys3 and Cys6 are each lipidated (S-palmitoyl cysteine). Residues 12 to 23 (DEKLNPVDESNH) show a composition bias toward basic and acidic residues. Ser21 is modified (phosphoserine). The segment covering 27–39 (KQSQPTVSNNISG) has biased composition (polar residues). One can recognise a Protein kinase domain in the interval 86–363 (FHPDTFLGEG…ADVVTALSYL (278 aa)). ATP-binding positions include 92–100 (LGEGGFGRV) and Lys115. Residue Tyr160 is modified to Phosphotyrosine. Asp213 acts as the Proton acceptor in catalysis. Phosphoserine occurs at positions 217 and 247. A phosphothreonine mark is found at Thr248 and Thr253. Tyr261 carries the post-translational modification Phosphotyrosine. The Recognition motif required for RPS5-mediated plant resistance to P.syringae motif lies at 292 to 296 (SEMPH). Residues 368-456 (YDPSKDDSRR…QGTSESNSTG (89 aa)) form a disordered region. 2 stretches are compositionally biased toward basic and acidic residues: residues 370-392 (PSKD…RNDD) and 400-429 (FDLE…RAVA). The segment covering 446–456 (EQGTSESNSTG) has biased composition (polar residues).

Belongs to the protein kinase superfamily. Ser/Thr protein kinase family. In terms of assembly, in infected plant cells, it interacts with the P.syringae virulence protein avrPphB. In uninfected plants, autophosphorylated form interacts with RPS5. Interacts with FLS2. Post-translationally, cleaved by avrPphB in infected plant cells. Its cleavage serves as a signal that triggers the RPS5-mediated defense system. In terms of processing, autophosphorylates. Autophosphorylation may be required to trigger the RPS5-mediated plant defense system. Palmitoylation at Cys-3 and Cys-6 are required for plasma membrane location that is essential for the RPS5-mediated plant defense response.

It localises to the cell membrane. The catalysed reaction is L-seryl-[protein] + ATP = O-phospho-L-seryl-[protein] + ADP + H(+). It catalyses the reaction L-threonyl-[protein] + ATP = O-phospho-L-threonyl-[protein] + ADP + H(+). Protein kinase required for plant defense mechanism mediated by the disease resistance (R) protein RPS5. In case of infection by Pseudomonas syringae, AvrPphB triggers RPS5-mediated defense mechanism via the cleavage of PBS1. Both kinase activity and cleavage by avrPphB are independently required to trigger the RPS5-mediated resistance. Contributes to PAMP-triggered immunity (PTI) signaling and defense responses downstream of FLS2. The polypeptide is Serine/threonine-protein kinase PBS1 (Arabidopsis thaliana (Mouse-ear cress)).